Here is a 511-residue protein sequence, read N- to C-terminus: Pickpocket protein 19 (511 aa).

Helical transmembrane passes span 59–79 (LWLAIVLGAVITGFSLYTVLM) and 471–491 (GIISLYIGASVMSFIELLFVL).

This sequence belongs to the amiloride-sensitive sodium channel (TC 1.A.6) family. As to expression, expressed in the tracheal system. Expressed in the taste-sensing terminal organ of the larval head. In adults, expressed in hairs on the tibia, femur and wing margin, but not in hairs on the tarsi of the leg.

Its subcellular location is the membrane. Part of a complex that plays a role in tracheal liquid clearance. In both larvae and adults, contributes to the behavioral response to salt. Probable role in sodium transport. The chain is Pickpocket protein 19 (ppk19) from Drosophila melanogaster (Fruit fly).